The following is a 279-amino-acid chain: HTH-type transcriptional activator RhaS (279 aa).

Residues 175–273 (QALLGWLQNN…SQAPKSLRHQ (99 aa)) enclose the HTH araC/xylS-type domain. 2 consecutive DNA-binding regions (H-T-H motif) follow at residues 192–213 (GGLA…KQHT) and 240–263 (ITTI…RKAF).

In terms of assembly, binds DNA as a dimer.

The protein resides in the cytoplasm. In terms of biological role, activates expression of the rhaBAD and rhaT operons. In Pectobacterium atrosepticum (strain SCRI 1043 / ATCC BAA-672) (Erwinia carotovora subsp. atroseptica), this protein is HTH-type transcriptional activator RhaS.